Consider the following 69-residue polypeptide: MTFYNYLMRHRAPVEKDDATRLANLVFQDPLFPKQSKDFDEISTYLETEAPFYFNLTLFDNVWLSYLEA.

It belongs to the UPF0346 family.

This Lactococcus lactis subsp. cremoris (strain MG1363) protein is UPF0346 protein llmg_2280.